The following is a 92-amino-acid chain: Large ribosomal subunit protein uL23 (92 aa).

The protein belongs to the universal ribosomal protein uL23 family. Part of the 50S ribosomal subunit. Contacts protein L29, and trigger factor when it is bound to the ribosome.

Its function is as follows. One of the early assembly proteins it binds 23S rRNA. One of the proteins that surrounds the polypeptide exit tunnel on the outside of the ribosome. Forms the main docking site for trigger factor binding to the ribosome. The polypeptide is Large ribosomal subunit protein uL23 (Bdellovibrio bacteriovorus (strain ATCC 15356 / DSM 50701 / NCIMB 9529 / HD100)).